Consider the following 597-residue polypeptide: Translation initiation factor IF-2 (597 aa).

Composition is skewed to low complexity over residues 57–73 and 81–95; these read GGDA…AATA and TPAA…PASD. The tract at residues 57–96 is disordered; that stretch reads GGDAAPAAASAPAAATAEPEEADETPAAAAQADAEPASDL. One can recognise a tr-type G domain in the interval 98-271; that stretch reads HRAPVVTIMG…ELEDLRADPK (174 aa). Residues 107-114 form a G1 region; that stretch reads GHVDHGKT. 107 to 114 is a binding site for GTP; it reads GHVDHGKT. Residues 132 to 136 form a G2 region; it reads GITQH. The interval 153–156 is G3; the sequence is DTPG. Residues 153-157 and 207-210 each bind GTP; these read DTPGH and NKVD. The segment at 207–210 is G4; the sequence is NKVD. Positions 243-245 are G5; that stretch reads SAK.

Belongs to the TRAFAC class translation factor GTPase superfamily. Classic translation factor GTPase family. IF-2 subfamily.

The protein localises to the cytoplasm. One of the essential components for the initiation of protein synthesis. Protects formylmethionyl-tRNA from spontaneous hydrolysis and promotes its binding to the 30S ribosomal subunits. Also involved in the hydrolysis of GTP during the formation of the 70S ribosomal complex. This chain is Translation initiation factor IF-2, found in Deinococcus radiodurans (strain ATCC 13939 / DSM 20539 / JCM 16871 / CCUG 27074 / LMG 4051 / NBRC 15346 / NCIMB 9279 / VKM B-1422 / R1).